A 158-amino-acid chain; its full sequence is Regulator of G-protein signaling 13 (158 aa).

Residues 34–150 (SLESLMATKY…LKSEMYQQLL (117 aa)) enclose the RGS domain.

Inhibits signal transduction by increasing the GTPase activity of G protein alpha subunits thereby driving them into their inactive GDP-bound form. Binds to both G(i)-alpha and G(q)-alpha. In Mus musculus (Mouse), this protein is Regulator of G-protein signaling 13 (Rgs13).